Reading from the N-terminus, the 181-residue chain is Large ribosomal subunit protein uL5 (181 aa).

This sequence belongs to the universal ribosomal protein uL5 family. Part of the 50S ribosomal subunit; part of the 5S rRNA/L5/L18/L25 subcomplex. Contacts the 5S rRNA and the P site tRNA. Forms a bridge to the 30S subunit in the 70S ribosome.

Functionally, this is one of the proteins that bind and probably mediate the attachment of the 5S RNA into the large ribosomal subunit, where it forms part of the central protuberance. In the 70S ribosome it contacts protein S13 of the 30S subunit (bridge B1b), connecting the 2 subunits; this bridge is implicated in subunit movement. Contacts the P site tRNA; the 5S rRNA and some of its associated proteins might help stabilize positioning of ribosome-bound tRNAs. This is Large ribosomal subunit protein uL5 from Helicobacter hepaticus (strain ATCC 51449 / 3B1).